The chain runs to 228 residues: uncharacterized protein (228 aa).

21 to 28 contacts ATP; that stretch reads GMIALGKT.

This is an uncharacterized protein from Mycoplasma genitalium (strain ATCC 33530 / DSM 19775 / NCTC 10195 / G37) (Mycoplasmoides genitalium).